Reading from the N-terminus, the 724-residue chain is Membrane protein YdfJ (724 aa).

12 helical membrane-spanning segments follow: residues 17 to 37 (IKAICAWIVVLVAAIGLAVTL), 179 to 199 (IVGIILAFVVLAITFGSLLIA), 200 to 220 (GLPILTALIGLGVSIGLVLIG), 231 to 251 (LSLAGMIGLAVGIDYALFIFT), 277 to 297 (AVVFAGLTVIVALCGLTVVNI), 309 to 329 (LSVLMAVLASITLVPAVLSIA), 360 to 380 (IMLSVCSILILIVISIPSMHL), 512 to 532 (AIPVFAVLIVGFAFVLLTIVF), 539 to 559 (LVAVAGFMLTMTATLGICVFV), 575 to 595 (GPILAFLPILSIGILFGLAMD), 627 to 647 (PVVTAAGLIMIFVFAGFIFAG), and 655 to 675 (GLALSFGVLFDAFIVRMTLIP).

Belongs to the resistance-nodulation-cell division (RND) (TC 2.A.6) family. MmpL subfamily.

Its subcellular location is the cell membrane. The polypeptide is Membrane protein YdfJ (ydfJ) (Bacillus subtilis (strain 168)).